Consider the following 355-residue polypeptide: Transcription factor TGAL9 (355 aa).

2 disordered regions span residues 83–104 (FPSQ…MAAI) and 118–188 (GSSK…DAKT). Over residues 118-134 (GSSKRPPAAAAAGGQPS) the composition is skewed to low complexity. The span at 135-144 (RLNNPADQPS) shows a compositional bias: polar residues. Basic and acidic residues-rich tracts occupy residues 148–159 (KDGKAAVVKKEG) and 176–188 (SEHE…DAKT). The region spanning 185-230 (DAKTLRRLAQNREAARKSRLRKKAYIQNLETSRIRLSQLEQELVQR) is the bZIP domain. Positions 187–207 (KTLRRLAQNREAARKSRLRKK) are basic motif. A leucine-zipper region spans residues 213 to 227 (LETSRIRLSQLEQEL). A DOG1 domain is found at 254–355 (AAWFDGEYAR…RPSELIKVST (102 aa)).

This sequence belongs to the bZIP family. As to quaternary structure, interacts with NPR5/NH4, NH5.1 and NH5.2.

It is found in the nucleus. Transcriptional regulator involved in defense response. This is Transcription factor TGAL9 from Oryza sativa subsp. japonica (Rice).